The chain runs to 262 residues: Tryptophan synthase alpha chain (262 aa).

Catalysis depends on proton acceptor residues glutamate 49 and aspartate 60.

This sequence belongs to the TrpA family. In terms of assembly, tetramer of two alpha and two beta chains.

The enzyme catalyses (1S,2R)-1-C-(indol-3-yl)glycerol 3-phosphate + L-serine = D-glyceraldehyde 3-phosphate + L-tryptophan + H2O. It participates in amino-acid biosynthesis; L-tryptophan biosynthesis; L-tryptophan from chorismate: step 5/5. Its function is as follows. The alpha subunit is responsible for the aldol cleavage of indoleglycerol phosphate to indole and glyceraldehyde 3-phosphate. In Thermoanaerobacter pseudethanolicus (strain ATCC 33223 / 39E) (Clostridium thermohydrosulfuricum), this protein is Tryptophan synthase alpha chain.